A 217-amino-acid polypeptide reads, in one-letter code: 3,4-dihydroxy-2-butanone 4-phosphate synthase (217 aa).

Residues 37–38 (RE), Asp42, 150–154 (RRGHT), and Glu174 each bind D-ribulose 5-phosphate. Glu38 contacts Mg(2+). His153 provides a ligand contact to Mg(2+).

It belongs to the DHBP synthase family. As to quaternary structure, homodimer. Mg(2+) serves as cofactor. Requires Mn(2+) as cofactor.

It catalyses the reaction D-ribulose 5-phosphate = (2S)-2-hydroxy-3-oxobutyl phosphate + formate + H(+). Its pathway is cofactor biosynthesis; riboflavin biosynthesis; 2-hydroxy-3-oxobutyl phosphate from D-ribulose 5-phosphate: step 1/1. Functionally, catalyzes the conversion of D-ribulose 5-phosphate to formate and 3,4-dihydroxy-2-butanone 4-phosphate. In Shewanella baltica (strain OS155 / ATCC BAA-1091), this protein is 3,4-dihydroxy-2-butanone 4-phosphate synthase.